The primary structure comprises 74 residues: DUP240 protein DFP2 (74 aa).

It belongs to the DUP/COS family.

The protein localises to the cytoplasm. It is found in the membrane. This Saccharomyces cerevisiae (strain ATCC 204508 / S288c) (Baker's yeast) protein is DUP240 protein DFP2.